Consider the following 300-residue polypeptide: 4-hydroxy-tetrahydrodipicolinate synthase (300 aa).

Thr-57 provides a ligand contact to pyruvate. The active-site Proton donor/acceptor is the Tyr-145. Lys-173 acts as the Schiff-base intermediate with substrate in catalysis. Pyruvate is bound at residue Ile-213.

It belongs to the DapA family. As to quaternary structure, homotetramer; dimer of dimers.

The protein resides in the cytoplasm. The catalysed reaction is L-aspartate 4-semialdehyde + pyruvate = (2S,4S)-4-hydroxy-2,3,4,5-tetrahydrodipicolinate + H2O + H(+). It participates in amino-acid biosynthesis; L-lysine biosynthesis via DAP pathway; (S)-tetrahydrodipicolinate from L-aspartate: step 3/4. Catalyzes the condensation of (S)-aspartate-beta-semialdehyde [(S)-ASA] and pyruvate to 4-hydroxy-tetrahydrodipicolinate (HTPA). The chain is 4-hydroxy-tetrahydrodipicolinate synthase from Corynebacterium jeikeium (strain K411).